Here is a 143-residue protein sequence, read N- to C-terminus: Putative pre-16S rRNA nuclease (143 aa).

Belongs to the YqgF nuclease family.

The protein localises to the cytoplasm. In terms of biological role, could be a nuclease involved in processing of the 5'-end of pre-16S rRNA. The polypeptide is Putative pre-16S rRNA nuclease (Marinobacter nauticus (strain ATCC 700491 / DSM 11845 / VT8) (Marinobacter aquaeolei)).